We begin with the raw amino-acid sequence, 582 residues long: Threonine--tRNA ligase (582 aa).

A catalytic region spans residues 185 to 478; the sequence is DHRKLGKELE…LTEQYGGAFP (294 aa). Cysteine 278, histidine 329, and histidine 455 together coordinate Zn(2+).

It belongs to the class-II aminoacyl-tRNA synthetase family. Homodimer. It depends on Zn(2+) as a cofactor.

Its subcellular location is the cytoplasm. The catalysed reaction is tRNA(Thr) + L-threonine + ATP = L-threonyl-tRNA(Thr) + AMP + diphosphate + H(+). Its function is as follows. Catalyzes the attachment of threonine to tRNA(Thr) in a two-step reaction: L-threonine is first activated by ATP to form Thr-AMP and then transferred to the acceptor end of tRNA(Thr). Also edits incorrectly charged L-seryl-tRNA(Thr). This is Threonine--tRNA ligase from Dehalococcoides mccartyi (strain ATCC BAA-2100 / JCM 16839 / KCTC 5957 / BAV1).